The following is a 496-amino-acid chain: Glycerol kinase 2 (496 aa).

Position 11 (Thr11) interacts with ADP. Residues Thr11, Thr12, and Ser13 each coordinate ATP. Thr11 lines the sn-glycerol 3-phosphate pocket. An ADP-binding site is contributed by Arg15. Residues Arg81, Glu82, Tyr133, and Asp242 each contribute to the sn-glycerol 3-phosphate site. Arg81, Glu82, Tyr133, Asp242, and Gln243 together coordinate glycerol. ADP is bound by residues Thr264 and Gly307. Residues Thr264, Gly307, Gln311, and Gly408 each contribute to the ATP site. 2 residues coordinate ADP: Gly408 and Asn412.

Belongs to the FGGY kinase family.

The enzyme catalyses glycerol + ATP = sn-glycerol 3-phosphate + ADP + H(+). Its pathway is polyol metabolism; glycerol degradation via glycerol kinase pathway; sn-glycerol 3-phosphate from glycerol: step 1/1. Inhibited by fructose 1,6-bisphosphate (FBP). Functionally, key enzyme in the regulation of glycerol uptake and metabolism. Catalyzes the phosphorylation of glycerol to yield sn-glycerol 3-phosphate. The protein is Glycerol kinase 2 of Thermotoga maritima (strain ATCC 43589 / DSM 3109 / JCM 10099 / NBRC 100826 / MSB8).